We begin with the raw amino-acid sequence, 618 residues long: Grainyhead-like protein 1 homolog (618 aa).

The tract at residues 1-91 is transcription activation; that stretch reads MTQEYDNKRP…EVEHPEPDHS (91 aa). The span at 74 to 92 shows a compositional bias: basic and acidic residues; the sequence is RRSSTAKPEVEHPEPDHSK. Residues 74–94 are disordered; sequence RRSSTAKPEVEHPEPDHSKRN. Phosphothreonine is present on Thr-208. The Grh/CP2 DB domain occupies 248 to 474; sequence SGNNFEYTLE…DLDTQPVLFI (227 aa). Interaction with DNA regions lie at residues 380-389 and 427-430; these read TDFSSQKGVK and RKIR.

This sequence belongs to the grh/CP2 family. Grainyhead subfamily. In terms of assembly, binds DNA as homodimer. Homodimer, also forms heterodimers with GRHL2 or GRHL3. In terms of processing, methylation at Arg-9 and Lys-116 may be involved in regulating transcriptional activation.

It localises to the nucleus. In terms of biological role, transcription factor involved in epithelial development. Binds directly to the consensus DNA sequence 5'-AACCGGTT-3'. Important regulator of DSG1 in the context of hair anchorage and epidermal differentiation, participates in the maintenance of the skin barrier. There is no genetic interaction with GRHL3, nor functional cooperativity due to diverse target gene selectivity during epithelia development. May play a role in regulating glucose homeostasis and insulin signaling. This Pongo abelii (Sumatran orangutan) protein is Grainyhead-like protein 1 homolog (GRHL1).